Reading from the N-terminus, the 288-residue chain is 2-hydroxy-6-oxononadienedioate/2-hydroxy-6-oxononatrienedioate hydrolase (288 aa).

H267 serves as the catalytic Proton acceptor.

It belongs to the AB hydrolase superfamily. MhpC family. Homodimer.

It catalyses the reaction (2Z,4E)-2-hydroxy-6-oxonona-2,4-dienedioate + H2O = (2Z)-2-hydroxypenta-2,4-dienoate + succinate + H(+). It carries out the reaction (2Z,4E,7E)-2-hydroxy-6-oxonona-2,4,7-trienedioate + H2O = (2Z)-2-hydroxypenta-2,4-dienoate + fumarate + H(+). It functions in the pathway aromatic compound metabolism; 3-phenylpropanoate degradation. Its function is as follows. Catalyzes the cleavage of the C5-C6 bond of 2-hydroxy-6-oxononadienedioate and 2-hydroxy-6-oxononatrienedioate, a dienol ring fission product of the bacterial meta-cleavage pathway for degradation of phenylpropionic acid. This Escherichia coli (strain K12 / DH10B) protein is 2-hydroxy-6-oxononadienedioate/2-hydroxy-6-oxononatrienedioate hydrolase.